Reading from the N-terminus, the 235-residue chain is Purine nucleoside phosphorylase DeoD-type (235 aa).

Residue histidine 4 participates in a purine D-ribonucleoside binding. Phosphate is bound by residues glycine 20, arginine 24, arginine 43, and 87–90; that span reads RVGT. Residues 178-180 and 202-203 contribute to the a purine D-ribonucleoside site; these read EME and SD. Aspartate 203 functions as the Proton donor in the catalytic mechanism.

The protein belongs to the PNP/UDP phosphorylase family. Homohexamer; trimer of homodimers.

The enzyme catalyses a purine D-ribonucleoside + phosphate = a purine nucleobase + alpha-D-ribose 1-phosphate. It catalyses the reaction a purine 2'-deoxy-D-ribonucleoside + phosphate = a purine nucleobase + 2-deoxy-alpha-D-ribose 1-phosphate. In terms of biological role, catalyzes the reversible phosphorolytic breakdown of the N-glycosidic bond in the beta-(deoxy)ribonucleoside molecules, with the formation of the corresponding free purine bases and pentose-1-phosphate. The protein is Purine nucleoside phosphorylase DeoD-type of Geobacillus sp. (strain WCH70).